The following is a 300-amino-acid chain: Ribosomal RNA small subunit methyltransferase H (300 aa).

S-adenosyl-L-methionine contacts are provided by residues 36-38 (GGH), Asp55, Leu89, Asp103, and Gln110.

The protein belongs to the methyltransferase superfamily. RsmH family.

It localises to the cytoplasm. The catalysed reaction is cytidine(1402) in 16S rRNA + S-adenosyl-L-methionine = N(4)-methylcytidine(1402) in 16S rRNA + S-adenosyl-L-homocysteine + H(+). Its function is as follows. Specifically methylates the N4 position of cytidine in position 1402 (C1402) of 16S rRNA. This Thermotoga neapolitana (strain ATCC 49049 / DSM 4359 / NBRC 107923 / NS-E) protein is Ribosomal RNA small subunit methyltransferase H.